A 540-amino-acid polypeptide reads, in one-letter code: Phosphatidylinositol 4-phosphate 5-kinase type-1 beta (540 aa).

Residues 1-21 (MSSAAENGEAAPGKQNEEKTY) form a disordered region. The PIPK domain occupies 25 to 395 (ASSAIKGAIQ…RFLKFMNSRV (371 aa)). 3 positions are modified to phosphoserine: Ser445, Ser447, and Ser448.

Interacts with RAC1, AJUBA, PLD1, PLD2 and ARF1. As to expression, detected in heart, pancreas, brain, kidney, skeletal muscle and lung.

It localises to the cytoplasm. The protein localises to the cytosol. The protein resides in the cell membrane. Its subcellular location is the endomembrane system. The catalysed reaction is a 1,2-diacyl-sn-glycero-3-phospho-(1D-myo-inositol 4-phosphate) + ATP = a 1,2-diacyl-sn-glycero-3-phospho-(1D-myo-inositol-4,5-bisphosphate) + ADP + H(+). The enzyme catalyses 1-octadecanoyl-2-(5Z,8Z,11Z,14Z)-eicosatetraenoyl-sn-glycero-3-phospho-1D-myo-inositol 4-phosphate + ATP = 1-octadecanoyl-2-(5Z,8Z,11Z,14Z)-eicosatetraenoyl-sn-glycero-3-phospho-1D-myo-inositol 4,5-bisphosphate + ADP + H(+). It carries out the reaction 1-octadecanoyl-2-(9Z)-octadecenoyl-sn-glycero-3-phospho-1D-myo-inositol 4-phosphate + ATP = 1-octadecanoyl-2-(9Z)-octadecenoyl-sn-glycero-3-phospho-1D-myo-inositol 4,5-bisphosphate + ADP + H(+). It catalyses the reaction 1-octadecanoyl-2-(9Z)-octadecenoyl-sn-glycero-3-phospho-1D-myo-inositol + ATP = 1-octadecanoyl-2-(9Z)-octadecenoyl-sn-glycero-3-phospho-1D-myo-inositol 5-phosphate + ADP + H(+). The catalysed reaction is 1-octadecanoyl-2-(9Z,12Z)-octadecadienoyl-sn-glycero-3-phospho-1D-myo-inositol + ATP = 1-octadecanoyl-2-(9Z,12Z)-octadecadienoyl-sn-glycero-3-phospho-1D-myo-inositol 5-phosphate + ADP + H(+). The enzyme catalyses 1-octadecanoyl-2-(5Z,8Z,11Z,14Z-eicosatetraenoyl)-sn-glycero-3-phospho-(1D-myo-inositol) + ATP = 1-octadecanoyl-2-(5Z,8Z,11Z,14Z)-eicosatetraenoyl-sn-glycero-3-phospho-1D-myo-inositol 5-phosphate + ADP + H(+). It carries out the reaction 1,2-di-(9Z,12Z)-octadecadienoyl-sn-glycero-3-phospho-1D-myo-inositol + ATP = 1,2-di(9Z,12Z)-octadecadienoyl-sn-glycero-3-phospho-1D-myo-inositol 5-phosphate + ADP + H(+). Its function is as follows. Catalyzes the phosphorylation of phosphatidylinositol 4-phosphate (PtdIns(4)P/PI4P) to form phosphatidylinositol 4,5-bisphosphate (PtdIns(4,5)P2/PIP2), a lipid second messenger that regulates several cellular processes such as signal transduction, vesicle trafficking, actin cytoskeleton dynamics, cell adhesion, and cell motility. PtdIns(4,5)P2 can directly act as a second messenger or can be utilized as a precursor to generate other second messengers: inositol 1,4,5-trisphosphate (IP3), diacylglycerol (DAG) or phosphatidylinositol-3,4,5-trisphosphate (PtdIns(3,4,5)P3/PIP3). Mediates RAC1-dependent reorganization of actin filaments. Contributes to the activation of phospholipase PLD2. Together with PIP5K1A, is required, after stimulation by G-protein coupled receptors, for the synthesis of IP3 that will induce stable platelet adhesion. This chain is Phosphatidylinositol 4-phosphate 5-kinase type-1 beta, found in Homo sapiens (Human).